The primary structure comprises 590 residues: Pentatricopeptide repeat-containing protein At1g63070, mitochondrial (590 aa).

The N-terminal 34 residues, 1–34 (MMRSVAVIGKKCLHRHTVLLKGNPRTTLCWERSF), are a transit peptide targeting the mitochondrion. 14 PPR repeats span residues 74-108 (SIVEFSKLLSAIAKMNKFDLVISLGEQMQNLGISH), 109-143 (NLYTYSIFINYFCRRSQLSLALAILGKMMKLGYGP), 144-178 (SIVTLNSLLNGFCHGNRISEAVALVDQMVEMGYQP), 179-213 (DTVTFTTLVHGLFQHNKASEAVALVERMVVKGCQP), 214-248 (DLVTYGAVINGLCKRGEPDLALNLLNKMEKGKIEA), 249-283 (DVVIYNTIIDGLCKYKHMDDAFDLFNKMETKGIKP), 284-318 (DVFTYNPLISCLCNYGRWSDASRLLSDMLEKNINP), 319-353 (DLVFFNALIDAFVKEGKLVEAEKLYDEMVKSKHCF), 355-389 (DVVAYNTLIKGFCKYKRVEEGMEVFREMSQRGLVG), 390-424 (NTVTYTTLIHGFFQARDCDNAQMVFKQMVSDGVHP), 425-459 (DIMTYNILLDGLCNNGNVETALVVFEYMQKRDMKL), 460-494 (DIVTYTTMIEALCKAGKVEDGWDLFCSLSLKGVKP), 495-529 (NVVTYTTMMSGFCRKGLKEEADALFVEMKEDGPLP), and 530-564 (NSGTYNTLIRARLRDGDEAASAELIKEMRSCGFAG).

Belongs to the PPR family. P subfamily.

It localises to the mitochondrion. The sequence is that of Pentatricopeptide repeat-containing protein At1g63070, mitochondrial from Arabidopsis thaliana (Mouse-ear cress).